Reading from the N-terminus, the 116-residue chain is CDKN2AIP N-terminal-like protein (116 aa).

Met1 is modified (N-acetylmethionine). One can recognise an XRN2-binding (XTBD) domain in the interval 24–116; sequence AEQFRSYSES…RSELMKKHQS (93 aa).

Belongs to the CARF family. As to quaternary structure, interacts with XRN2; the interaction is direct.

The polypeptide is CDKN2AIP N-terminal-like protein (CDKN2AIPNL) (Bos taurus (Bovine)).